A 282-amino-acid chain; its full sequence is Succinate dehydrogenase [ubiquinone] iron-sulfur subunit, mitochondrial (282 aa).

Positions 43–131 (YRFNPEAPGA…STKIYPLPHM (89 aa)) constitute a 2Fe-2S ferredoxin-type domain. [2Fe-2S] cluster is bound by residues C91, C96, C99, and C111. Residues 174–204 (ERDRLDGLYECILCACCSTSCPSYWWNADKY) form the 4Fe-4S ferredoxin-type domain. [4Fe-4S] cluster contacts are provided by C184, C187, and C190. C194 lines the [3Fe-4S] cluster pocket. W199 lines the a ubiquinone pocket. Positions 241 and 247 each coordinate [3Fe-4S] cluster. Residue C251 coordinates [4Fe-4S] cluster.

It belongs to the succinate dehydrogenase/fumarate reductase iron-sulfur protein family. In terms of assembly, component of complex II composed of four subunits: a flavoprotein (FP), an iron-sulfur protein (IP), and a cytochrome b composed of a large and a small subunit. It depends on [2Fe-2S] cluster as a cofactor. Requires [3Fe-4S] cluster as cofactor. [4Fe-4S] cluster serves as cofactor.

It is found in the mitochondrion inner membrane. The catalysed reaction is a quinone + succinate = fumarate + a quinol. It functions in the pathway carbohydrate metabolism; tricarboxylic acid cycle; fumarate from succinate (eukaryal route): step 1/1. In terms of biological role, iron-sulfur protein (IP) subunit of succinate dehydrogenase (SDH) that is involved in complex II of the mitochondrial electron transport chain and is responsible for transferring electrons from succinate to ubiquinone (coenzyme Q). This chain is Succinate dehydrogenase [ubiquinone] iron-sulfur subunit, mitochondrial, found in Caenorhabditis briggsae.